A 433-amino-acid chain; its full sequence is sn-glycerol-3-phosphate-binding periplasmic protein UgpB (433 aa).

An N-terminal signal peptide occupies residues 1-25 (MFTRLITTSVLTGAIALTIGSQAFA). Positions 67, 91, 146, 273, 307, 346, and 397 each coordinate sn-glycerol 3-phosphate.

Belongs to the bacterial solute-binding protein 1 family. The complex is composed of two ATP-binding proteins (UgpC), two transmembrane proteins (UgpA and UgpE) and a solute-binding protein (UgpB).

It localises to the periplasm. Part of the ABC transporter complex UgpBAEC involved in sn-glycerol-3-phosphate (G3P) import. Binds G3P. This is sn-glycerol-3-phosphate-binding periplasmic protein UgpB (ugpB) from Brucella abortus (strain 2308).